A 918-amino-acid chain; its full sequence is MGTTAPGPIHLLELCDQKLMEFLCNMDNKDLVWLEEIQEEAERMFTREFSKEPELMPKTPSQKNRRKKRRISYVQDENRDPIRRRLSRRKSRSSQLSSRRLRSKDSVEKLATVVGENGSVLRRVTRAAAAAAAATMALAAPSSPTPESPTMLTKKPEDNHTQCQLVPVVEIGISERQNAEQHVTQLMSTEPLPRTLSPTPASATAPTSQGIPTSDEESTPKKSKARILESITVSSLMATPQDPKGQGVGTGRSASKLRIAQVSPGPRDSPAFPDSPWRERVLAPILPDNFSTPTGSRTDSQSVRHSPIAPSSPSPQVLAQKYSLVAKQESVVRRASRRLAKKTAEEPAASGRIICHSYLERLLNVEVPQKVGSEQKEPPEEAEPVAAAEPEVPENNGNNSWPHNDTEIANSTPNPKPAASSPETPSAGQQEAKTDQADGPREPPQSARRKRSYKQAVSELDEEQHLEDEELQPPRSKTPSSPCPASKVVRPLRTFLHTVQRNQMLMTPTSAPRSVMKSFIKRNTPLRMDPKCSFVEKERQRLENLRRKEEAEQLRRQKVEEDKRRRLEEVKLKREERLRKVLQARERVEQMKEEKKKQIEQKFAQIDEKTEKAKEERLAEEKAKKKAAAKKMEEVEARRKQEEEARRLRWLQQEEEERRHQELLQKKKEEEQERLRKAAEAKRLAEQREQERREQERREQERREQERREQERREQERQLAEQERRREQERLQAERELQEREKALRLQKEQLQRELEEKKKKEEQQRLAERQLQEEQEKKAKEAAGASKALNVTVDVQSPACTSYQMTPQGHRAPPKINPDNYGMDLNSDDSTDDEAHPRKPIPTWARGTPLSQAIIHQYYHPPNLLELFGTILPLDLEDIFKKSKPRYHKRTSSAVWNSPPLQGARVPSSLAYSLKKH.

The segment at 48 to 105 (EFSKEPELMPKTPSQKNRRKKRRISYVQDENRDPIRRRLSRRKSRSSQLSSRRLRSKD) is disordered. Phosphoserine is present on residues S72, S119, S143, and S148. The tract at residues 124–248 (VTRAAAAAAA…TPQDPKGQGV (125 aa)) is interaction with CBX5. The segment at 138 to 159 (LAAPSSPTPESPTMLTKKPEDN) is disordered. T150 is subject to Phosphothreonine. The PXVXL/I motif motif lies at 167–171 (PVVEI). The segment at 190-253 (EPLPRTLSPT…KGQGVGTGRS (64 aa)) is disordered. T195 bears the Phosphothreonine mark. S197 carries the post-translational modification Phosphoserine. Over residues 197–208 (SPTPASATAPTS) the composition is skewed to low complexity. A phosphothreonine mark is found at T199 and T213. The residue at position 214 (S214) is a Phosphoserine. T219 and T239 each carry phosphothreonine. A phosphoserine mark is found at S263, S269, and S275. The tract at residues 285 to 316 (ILPDNFSTPTGSRTDSQSVRHSPIAPSSPSPQ) is disordered. The span at 289–316 (NFSTPTGSRTDSQSVRHSPIAPSSPSPQ) shows a compositional bias: polar residues. A Phosphothreonine modification is found at T292. Phosphoserine occurs at positions 296, 306, 312, 314, and 330. Residues 371 to 489 (VGSEQKEPPE…SSPCPASKVV (119 aa)) form a disordered region. The span at 384 to 394 (PVAAAEPEVPE) shows a compositional bias: low complexity. Composition is skewed to polar residues over residues 395–413 (NNGN…NSTP) and 421–431 (SPETPSAGQQE). A Phosphoserine modification is found at S400. The residue at position 406 (T406) is a Phosphothreonine. Residues 432–441 (AKTDQADGPR) are compositionally biased toward basic and acidic residues. Position 446 is a phosphoserine (S446). The span at 459 to 471 (ELDEEQHLEDEEL) shows a compositional bias: acidic residues. S476 carries the post-translational modification Phosphoserine. Phosphothreonine is present on T478. Phosphoserine is present on residues S480, S510, and S514. The SAH stretch occupies residues 531–765 (KCSFVEKERQ…EEKKKKEEQQ (235 aa)). 2 stretches are compositionally biased toward basic and acidic residues: residues 607–623 (DEKT…EEKA) and 630–640 (KKMEEVEARRK). Disordered stretches follow at residues 607–640 (DEKT…ARRK), 660–740 (HQEL…LQER), 754–787 (ELEE…AGAS), and 826–845 (LNSD…IPTW). A compositionally biased stretch (basic and acidic residues) spans 754–782 (ELEEKKKKEEQQRLAERQLQEEQEKKAKE). An interaction with AURKC region spans residues 822–897 (YGMDLNSDDS…YHKRTSSAVW (76 aa)). The IN box stretch occupies residues 826-900 (LNSDDSTDDE…RTSSAVWNSP (75 aa)). Residues S828 and S831 each carry the phosphoserine modification. The residue at position 832 (T832) is a Phosphothreonine. A Phosphothreonine; by AURKB and AURKC modification is found at T892. A phosphoserine; by AURKB and AURKC mark is found at S893 and S894. Residues S899 and S914 each carry the phosphoserine modification.

This sequence belongs to the INCENP family. As to quaternary structure, component of the chromosomal passenger complex (CPC) composed of at least BIRC5/survivin, CDCA8/borealin, INCENP, AURKB or AURKC; in the complex binds directly to AURKB or AURKC via the IN box, and forms a triple-helix bundle-based subcomplex with BIRC5 and CDCA8 via its N-terminus. The reported homodimerization is questioned as the SAH domain is shown to be monomeric. Interacts with H2AZ1. Interacts with CBX1 and CBX3. Interacts with tubulin beta chain. Interacts with EVI5. Interacts with CBX5; POGZ and INCENP compete for interaction with CBX5; regulates INCENP (and probably CPC) localization to centromeres in interphase and not required for proper mitotic progression or sister chromatid cohesion. Interacts with POGZ. Interacts with JTB. In terms of processing, phosphorylation by AURKB or AURKC at its C-terminal part is important for AURKB or AURKC activation by INCENP.

The protein localises to the nucleus. It localises to the chromosome. Its subcellular location is the centromere. The protein resides in the cytoplasm. It is found in the cytoskeleton. The protein localises to the spindle. It localises to the midbody. Its subcellular location is the kinetochore. Component of the chromosomal passenger complex (CPC), a complex that acts as a key regulator of mitosis. The CPC complex has essential functions at the centromere in ensuring correct chromosome alignment and segregation and is required for chromatin-induced microtubule stabilization and spindle assembly. Acts as a scaffold regulating CPC localization and activity. The C-terminus associates with AURKB or AURKC, the N-terminus associated with BIRC5/survivin and CDCA8/borealin tethers the CPC to the inner centromere, and the microtubule binding activity within the central SAH domain directs AURKB/C toward substrates near microtubules. The flexibility of the SAH domain is proposed to allow AURKB/C to follow substrates on dynamic microtubules while ensuring CPC docking to static chromatin. Activates AURKB and AURKC. Required for localization of CBX5 to mitotic centromeres. Controls the kinetochore localization of BUB1. The sequence is that of Inner centromere protein (INCENP) from Homo sapiens (Human).